Consider the following 337-residue polypeptide: B3 domain-containing protein REM16 (337 aa).

DNA-binding regions (TF-B3) lie at residues 22-116 (TLHF…FDGQ) and 223-321 (FLVF…FRGE).

It localises to the nucleus. This Arabidopsis thaliana (Mouse-ear cress) protein is B3 domain-containing protein REM16 (REM16).